The primary structure comprises 1573 residues: Pentafunctional AROM polypeptide (1573 aa).

The segment at 1-384 (MSNESNIITV…YEKHATVVSD (384 aa)) is 3-dehydroquinate synthase. Residues 46 to 48 (DSN), 83 to 86 (ESSK), 114 to 116 (GGV), and D119 each bind NAD(+). R130 contacts 7-phospho-2-dehydro-3-deoxy-D-arabino-heptonate. 139 to 140 (TT) is an NAD(+) binding site. Positions 146 and 152 each coordinate 7-phospho-2-dehydro-3-deoxy-D-arabino-heptonate. K161 lines the NAD(+) pocket. N162 is a binding site for 7-phospho-2-dehydro-3-deoxy-D-arabino-heptonate. NAD(+) contacts are provided by residues 179–182 (FLHT) and N190. Position 194 (E194) interacts with Zn(2+). 7-phospho-2-dehydro-3-deoxy-D-arabino-heptonate is bound by residues 194–197 (EIIK) and K250. Catalysis depends on E260, which acts as the Proton acceptor; for 3-dehydroquinate synthase activity. Residues 264–268 (RNLLN) and H271 each bind 7-phospho-2-dehydro-3-deoxy-D-arabino-heptonate. H271 is a Zn(2+) binding site. H275 functions as the Proton acceptor; for 3-dehydroquinate synthase activity in the catalytic mechanism. 7-phospho-2-dehydro-3-deoxy-D-arabino-heptonate-binding residues include H287 and K356. H287 is a Zn(2+) binding site. The segment at 397 to 843 (VDEFTKSSWD…WDVLHQSFGV (447 aa)) is EPSP synthase. C825 serves as the catalytic For EPSP synthase activity. The interval 863–1058 (NASIILIGMR…KTKKRSTFLT (196 aa)) is shikimate kinase. 870–877 (GMRGAGKT) contributes to the ATP binding site. The tract at residues 1059–1280 (LNYPRIEDAL…AAPGQLTVKQ (222 aa)) is 3-dehydroquinase. The active-site Proton acceptor; for 3-dehydroquinate dehydratase activity is the H1182. Residue K1211 is the Schiff-base intermediate with substrate; for 3-dehydroquinate dehydratase activity of the active site. The segment at 1293–1573 (PEKFFLFGKP…FDAVYQKVIE (281 aa)) is shikimate dehydrogenase.

It in the N-terminal section; belongs to the sugar phosphate cyclases superfamily. Dehydroquinate synthase family. In the 2nd section; belongs to the EPSP synthase family. The protein in the 3rd section; belongs to the shikimate kinase family. This sequence in the 4th section; belongs to the type-I 3-dehydroquinase family. It in the C-terminal section; belongs to the shikimate dehydrogenase family. Homodimer. Zn(2+) is required as a cofactor.

Its subcellular location is the cytoplasm. It catalyses the reaction 7-phospho-2-dehydro-3-deoxy-D-arabino-heptonate = 3-dehydroquinate + phosphate. The catalysed reaction is 3-dehydroquinate = 3-dehydroshikimate + H2O. It carries out the reaction shikimate + NADP(+) = 3-dehydroshikimate + NADPH + H(+). The enzyme catalyses shikimate + ATP = 3-phosphoshikimate + ADP + H(+). It catalyses the reaction 3-phosphoshikimate + phosphoenolpyruvate = 5-O-(1-carboxyvinyl)-3-phosphoshikimate + phosphate. The protein operates within metabolic intermediate biosynthesis; chorismate biosynthesis; chorismate from D-erythrose 4-phosphate and phosphoenolpyruvate: step 2/7. It participates in metabolic intermediate biosynthesis; chorismate biosynthesis; chorismate from D-erythrose 4-phosphate and phosphoenolpyruvate: step 3/7. It functions in the pathway metabolic intermediate biosynthesis; chorismate biosynthesis; chorismate from D-erythrose 4-phosphate and phosphoenolpyruvate: step 4/7. Its pathway is metabolic intermediate biosynthesis; chorismate biosynthesis; chorismate from D-erythrose 4-phosphate and phosphoenolpyruvate: step 5/7. The protein operates within metabolic intermediate biosynthesis; chorismate biosynthesis; chorismate from D-erythrose 4-phosphate and phosphoenolpyruvate: step 6/7. In terms of biological role, the AROM polypeptide catalyzes 5 consecutive enzymatic reactions in prechorismate polyaromatic amino acid biosynthesis. In Schizosaccharomyces pombe (strain 972 / ATCC 24843) (Fission yeast), this protein is Pentafunctional AROM polypeptide.